The sequence spans 558 residues: WW domain-containing adapter protein with coiled-coil (558 aa).

Disordered regions lie at residues 1–129, 159–244, and 321–461; these read MVMY…WSEH, QRQK…SPAP, and VAQQ…APGR. The segment covering 22–32 has biased composition (polar residues); it reads QPYQTLKYSSK. Composition is skewed to basic and acidic residues over residues 33–46 and 56–70; these read SHPDHRHEKMRDSN and RRSDSPDNKHMDNTG. Positions 72–82 are enriched in basic residues; it reads GRAKAIHPHRG. Residues 99–116 show a composition bias toward low complexity; the sequence is NHSSLHSSNSHSNPNKSS. One can recognise a WW domain in the interval 120–153; the sequence is FEPADDWSEHISSSGKKYYYNCRTEVSQWEKPKE. Basic and acidic residues predominate over residues 175–184; the sequence is PKDRDYRREA. Positions 188–200 are enriched in polar residues; that stretch reads TPASYSSTKSSIA. Positions 204–217 are enriched in low complexity; the sequence is PSSLTPSSSSAAVS. Composition is skewed to polar residues over residues 223-234 and 321-378; these read NSASSASGSTVP and VAQQ…MTVK. Low complexity predominate over residues 402-431; the sequence is SPRTLQRQSSQRSPSPGPNHMGSNSSSSSN. Positions 432-443 are enriched in gly residues; that stretch reads NGGGGGGQGPGV. The stretch at 529-555 forms a coiled coil; that stretch reads QATLREQRILFLRQQIKELEKLKNQNS.

It localises to the nucleus. Its function is as follows. Acts as a linker between gene transcription and histone H2B monoubiquitination at 'Lys-120' (H2BK120ub1). Positive regulator of amino acid starvation-induced autophagy. Positively regulates MTOR activity. May negatively regulate the ubiquitin proteasome pathway. In Danio rerio (Zebrafish), this protein is WW domain-containing adapter protein with coiled-coil (waca).